We begin with the raw amino-acid sequence, 982 residues long: E3 ubiquitin-protein ligase CBL-B (982 aa).

A compositionally biased stretch (low complexity) spans 1–14 (MASSSSSSSSTNSS). Residues 1-25 (MASSSSSSSSTNSSAVTGRLPGARS) are disordered. The segment at 46–178 (PPKQAAADRR…KAIFPSGQFQ (133 aa)) is 4H. The Cbl-PTB domain occupies 46 to 354 (PPKQAAADRR…GRSYNPDLTD (309 aa)). The tract at residues 179-251 (GDNFRITKAD…FEFDIFTRLF (73 aa)) is EF-hand-like. Ca(2+) contacts are provided by aspartate 232, threonine 234, asparagine 236, tyrosine 238, and glutamate 243. Positions 252 to 354 (QPWTSILRNW…GRSYNPDLTD (103 aa)) are SH2-like. Arginine 297 contacts 4-O-phospho-L-tyrosine. Residues 355–383 (LCEPTPHDHIKVTQEQYELYCEMGSTFQL) form a linker region. The RING-type zinc-finger motif lies at 384-423 (CKICAENDKDVKIEPCGHLMCTSCLTSWQESDGQGCPFCR). 3 disordered regions span residues 480–582 (MNER…RTCR), 709–728 (VRNS…SHPV), and 766–911 (LKQP…PVPR). Over residues 483–497 (RQNSPVTSPGSSPLS) the composition is skewed to polar residues. The segment covering 554–576 (LPAPPPPLREPPPPPERPPPIPP) has biased composition (pro residues). A compositionally biased stretch (pro residues) spans 825-834 (PSQPPPPPPA). A UBA domain is found at 927-970 (SLAENVDAKIAKLMGEGFPFEEVKRALEIAQNNVDVARSILREF).

In terms of assembly, interacts with several SH3 domain-containing proteins and with poly-ubiquitinated proteins.

It localises to the cytoplasm. It carries out the reaction S-ubiquitinyl-[E2 ubiquitin-conjugating enzyme]-L-cysteine + [acceptor protein]-L-lysine = [E2 ubiquitin-conjugating enzyme]-L-cysteine + N(6)-ubiquitinyl-[acceptor protein]-L-lysine.. The protein operates within protein modification; protein ubiquitination. E3 ubiquitin-protein ligase which accepts ubiquitin from specific E2 ubiquitin-conjugating enzymes, and transfers it to substrates, generally promoting their degradation by the proteasome. This Xenopus tropicalis (Western clawed frog) protein is E3 ubiquitin-protein ligase CBL-B (cblb).